The sequence spans 1017 residues: A-type ATP synthase subunit A (1017 aa).

The region spanning 396–529 is the DOD-type homing endonuclease domain; sequence FLGYLIADGT…FSYLLAKLGI (134 aa).

This sequence belongs to the ATPase alpha/beta chains family. In terms of assembly, has multiple subunits with at least A(3), B(3), C, D, E, F, H, I and proteolipid K(x). This protein undergoes a protein self splicing that involves a post-translational excision of the VDE intervening region (intein) followed by peptide ligation.

It localises to the cell membrane. The enzyme catalyses ATP + H2O + 4 H(+)(in) = ADP + phosphate + 5 H(+)(out). Its function is as follows. Component of the A-type ATP synthase that produces ATP from ADP in the presence of a proton gradient across the membrane. The A chain is the catalytic subunit. The chain is A-type ATP synthase subunit A from Pyrococcus abyssi (strain GE5 / Orsay).